The following is a 201-amino-acid chain: Osmotically-inducible protein Y (201 aa).

The N-terminal stretch at Met-1 to Ala-28 is a signal peptide. 2 consecutive BON domains span residues Asp-55–Asp-123 and Gly-134–Lys-201.

It is found in the periplasm. This is Osmotically-inducible protein Y (osmY) from Escherichia coli (strain K12).